The sequence spans 391 residues: 3-ketoacyl-CoA thiolase (391 aa).

The Acyl-thioester intermediate role is filled by cysteine 95. Catalysis depends on proton acceptor residues histidine 347 and cysteine 377.

It belongs to the thiolase-like superfamily. Thiolase family. As to quaternary structure, heterotetramer of two alpha chains (FadB) and two beta chains (FadA).

Its subcellular location is the cytoplasm. The enzyme catalyses an acyl-CoA + acetyl-CoA = a 3-oxoacyl-CoA + CoA. It participates in lipid metabolism; fatty acid beta-oxidation. Its function is as follows. Catalyzes the final step of fatty acid oxidation in which acetyl-CoA is released and the CoA ester of a fatty acid two carbons shorter is formed. This chain is 3-ketoacyl-CoA thiolase, found in Hahella chejuensis (strain KCTC 2396).